A 242-amino-acid chain; its full sequence is HTH domain-truncated transcriptional regulator QseD (242 aa).

The protein belongs to the LysR transcriptional regulatory family.

Represses EHEC virulence expression. Down-regulates expression of LEE (locus of enterocyte effacement) and iraD genes, and alters AE (attaching and effacing) lesion formation. May regulate transcription through interactions with another HTH DNA-binding protein. The sequence is that of HTH domain-truncated transcriptional regulator QseD (qseD) from Escherichia coli O157:H7.